The primary structure comprises 259 residues: Protein-L-isoaspartate O-methyltransferase 1 (259 aa).

The active site involves Ser-109.

Belongs to the methyltransferase superfamily. L-isoaspartyl/D-aspartyl protein methyltransferase family.

It is found in the cytoplasm. The enzyme catalyses [protein]-L-isoaspartate + S-adenosyl-L-methionine = [protein]-L-isoaspartate alpha-methyl ester + S-adenosyl-L-homocysteine. In terms of biological role, catalyzes the methyl esterification of L-isoaspartyl residues in peptides and proteins that result from spontaneous decomposition of normal L-aspartyl and L-asparaginyl residues. It plays a role in the repair and/or degradation of damaged proteins. This is Protein-L-isoaspartate O-methyltransferase 1 from Cupriavidus necator (strain ATCC 17699 / DSM 428 / KCTC 22496 / NCIMB 10442 / H16 / Stanier 337) (Ralstonia eutropha).